A 258-amino-acid polypeptide reads, in one-letter code: Tryptophan synthase alpha chain (258 aa).

Active-site proton acceptor residues include Glu50 and Asp61.

It belongs to the TrpA family. As to quaternary structure, tetramer of two alpha and two beta chains.

The enzyme catalyses (1S,2R)-1-C-(indol-3-yl)glycerol 3-phosphate + L-serine = D-glyceraldehyde 3-phosphate + L-tryptophan + H2O. It participates in amino-acid biosynthesis; L-tryptophan biosynthesis; L-tryptophan from chorismate: step 5/5. The alpha subunit is responsible for the aldol cleavage of indoleglycerol phosphate to indole and glyceraldehyde 3-phosphate. The protein is Tryptophan synthase alpha chain of Clostridium beijerinckii (strain ATCC 51743 / NCIMB 8052) (Clostridium acetobutylicum).